The chain runs to 1558 residues: Hybrid PKS-NRPS synthetase TAS1 (1558 aa).

Positions Y27–V392 are condensation (C) domain. The interval T522–T919 is adenylation (A) domain. The tract at residues T995–A1028 is disordered. The Carrier domain maps to S1027–E1104. The residue at position 1063 (S1063) is an O-(pantetheine 4'-phosphoryl)serine. The disordered stretch occupies residues L1116 to R1144. The span at Q1131–P1140 shows a compositional bias: polar residues. A Ketosynthase family 3 (KS3) domain is found at K1145–S1558. Residues C1308, H1444, and N1484 each act as for beta-ketoacyl synthase activity in the active site.

In the N-terminal section; belongs to the NRP synthetase family. Requires pantetheine 4'-phosphate as cofactor.

It catalyses the reaction acetoacetyl-CoA + L-isoleucine + ATP = tenuazonic acid + AMP + diphosphate + CoA + 2 H(+). Functionally, hybrid PKS-NRPS synthetase that mediates the biosynthesis of the toxin tenuazonic acid (TeA), an inhibitor of protein biosynthesis on ribosomes by suppressing the release of new protein. TAS1 alone is sufficient for TeA synthesis via the condensation of isoleucine (Ile) with acetoacetyl-CoA by the N-terminal NRPS module and subsequent cyclization conducted by the C-terminal KS domain. The polypeptide is Hybrid PKS-NRPS synthetase TAS1 (Gloeophyllum trabeum (strain ATCC 11539 / FP-39264 / Madison 617) (Brown rot fungus)).